The chain runs to 795 residues: Phenylalanine--tRNA ligase beta subunit (795 aa).

The tRNA-binding domain maps to 39–148 (AGTFNGVVVG…LDAPIGTDLR (110 aa)). One can recognise a B5 domain in the interval 401–476 (PKVNTVQLRR…RIYGYNSIPN (76 aa)). Mg(2+) contacts are provided by Asp-454, Asp-460, Glu-463, and Glu-464. The FDX-ACB domain maps to 701–794 (SKFPANRRDL…VKQRFNAELR (94 aa)).

This sequence belongs to the phenylalanyl-tRNA synthetase beta subunit family. Type 1 subfamily. In terms of assembly, tetramer of two alpha and two beta subunits. The cofactor is Mg(2+).

The protein localises to the cytoplasm. The catalysed reaction is tRNA(Phe) + L-phenylalanine + ATP = L-phenylalanyl-tRNA(Phe) + AMP + diphosphate + H(+). This is Phenylalanine--tRNA ligase beta subunit (pheT) from Haemophilus influenzae (strain ATCC 51907 / DSM 11121 / KW20 / Rd).